A 318-amino-acid polypeptide reads, in one-letter code: Deoxymugineic acid synthase 1 (318 aa).

D48 serves as a coordination point for NADP(+). Catalysis depends on Y53, which acts as the Proton donor. H116 is a binding site for substrate. NADP(+) contacts are provided by residues 162–163 (CN), Q184, 262–270 (FDEARMREN), and 277–285 (ELTEEERQR).

The protein belongs to the aldo/keto reductase family. As to expression, confined to cells participating in long distance transport (e.g. in the parts of pericycle cells adjacent to the protoxylem and metaxylem) in roots and to vascular bundles in shoots.

The enzyme catalyses 2'-deoxymugineate + NAD(+) = 3''-deamino-3''-oxonicotianamine + NADH + H(+). It catalyses the reaction 2'-deoxymugineate + NADP(+) = 3''-deamino-3''-oxonicotianamine + NADPH + H(+). Its pathway is siderophore biosynthesis. Catalyzes the reduction of a 3''-keto intermediate during the biosynthesis of 2'-deoxymugineic acid (DMA) from L-Met. Involved in the formation of phytosiderophores (MAs) belonging to the mugineic acid family and required to acquire iron. In Oryza sativa subsp. japonica (Rice), this protein is Deoxymugineic acid synthase 1.